Here is an 817-residue protein sequence, read N- to C-terminus: Protein EFR3 homolog B (817 aa).

Residues S212, S214, and S216 each carry the phosphoserine modification.

This sequence belongs to the EFR3 family. As to quaternary structure, component of a phosphatidylinositol 4-kinase (PI4K) complex, composed of PI4KA, EFR3 (EFR3A or EFR3B), TTC7 (TTC7A or TTC7B) and HYCC (HYCC1 or HYCC2). In terms of processing, palmitoylated at its N-terminus, anchoring the protein to the plasma membrane. As to expression, widely expressed.

The protein resides in the cell membrane. Its subcellular location is the cytoplasm. It localises to the cytosol. Component of a complex required to localize phosphatidylinositol 4-kinase (PI4K) to the plasma membrane. The complex acts as a regulator of phosphatidylinositol 4-phosphate (PtdIns(4)P) synthesis. In the complex, EFR3B probably acts as the membrane-anchoring component. Also involved in responsiveness to G-protein-coupled receptors; it is however unclear whether this role is direct or indirect. This Mus musculus (Mouse) protein is Protein EFR3 homolog B (Efr3b).